A 336-amino-acid polypeptide reads, in one-letter code: Dihydroorotate dehydrogenase (quinone) (336 aa).

Residues 62–66 and Thr86 contribute to the FMN site; that span reads AGLDK. Residue Lys66 coordinates substrate. 111-115 contributes to the substrate binding site; that stretch reads NRMGF. Residues Asn139 and Asn172 each contribute to the FMN site. Substrate is bound at residue Asn172. The Nucleophile role is filled by Ser175. Asn177 contributes to the substrate binding site. Positions 217 and 245 each coordinate FMN. 246–247 contributes to the substrate binding site; the sequence is NT. Residues Gly268, Gly297, and 318 to 319 contribute to the FMN site; that span reads YS.

It belongs to the dihydroorotate dehydrogenase family. Type 2 subfamily. Monomer. The cofactor is FMN.

It localises to the cell membrane. It carries out the reaction (S)-dihydroorotate + a quinone = orotate + a quinol. It functions in the pathway pyrimidine metabolism; UMP biosynthesis via de novo pathway; orotate from (S)-dihydroorotate (quinone route): step 1/1. Catalyzes the conversion of dihydroorotate to orotate with quinone as electron acceptor. The polypeptide is Dihydroorotate dehydrogenase (quinone) (Escherichia coli (strain UTI89 / UPEC)).